A 600-amino-acid polypeptide reads, in one-letter code: Proline--tRNA ligase (600 aa).

It belongs to the class-II aminoacyl-tRNA synthetase family. ProS type 1 subfamily. As to quaternary structure, homodimer.

The protein resides in the cytoplasm. The catalysed reaction is tRNA(Pro) + L-proline + ATP = L-prolyl-tRNA(Pro) + AMP + diphosphate. In terms of biological role, catalyzes the attachment of proline to tRNA(Pro) in a two-step reaction: proline is first activated by ATP to form Pro-AMP and then transferred to the acceptor end of tRNA(Pro). As ProRS can inadvertently accommodate and process non-cognate amino acids such as alanine and cysteine, to avoid such errors it has two additional distinct editing activities against alanine. One activity is designated as 'pretransfer' editing and involves the tRNA(Pro)-independent hydrolysis of activated Ala-AMP. The other activity is designated 'posttransfer' editing and involves deacylation of mischarged Ala-tRNA(Pro). The misacylated Cys-tRNA(Pro) is not edited by ProRS. This Synechococcus sp. (strain RCC307) protein is Proline--tRNA ligase.